A 492-amino-acid polypeptide reads, in one-letter code: ATP synthase subunit beta, chloroplastic (492 aa).

170-177 serves as a coordination point for ATP; the sequence is GGAGVGKT.

The protein belongs to the ATPase alpha/beta chains family. In terms of assembly, F-type ATPases have 2 components, CF(1) - the catalytic core - and CF(0) - the membrane proton channel. CF(1) has five subunits: alpha(3), beta(3), gamma(1), delta(1), epsilon(1). CF(0) has four main subunits: a(1), b(1), b'(1) and c(9-12).

It is found in the plastid. It localises to the chloroplast thylakoid membrane. The enzyme catalyses ATP + H2O + 4 H(+)(in) = ADP + phosphate + 5 H(+)(out). Its function is as follows. Produces ATP from ADP in the presence of a proton gradient across the membrane. The catalytic sites are hosted primarily by the beta subunits. The polypeptide is ATP synthase subunit beta, chloroplastic (Anthoceros angustus (Hornwort)).